Here is a 622-residue protein sequence, read N- to C-terminus: Pyranose 2-oxidase (622 aa).

The first 28 residues, 1 to 28, serve as a signal peptide directing secretion; sequence MSTSSSDPFYNFAKTSFKSAAAQKASAT. A propeptide spanning residues 29-38 is cleaved from the precursor; the sequence is SLPPLPGPDQ. Histidine 167 is subject to Tele-8alpha-FAD histidine. Substrate contacts are provided by glutamine 448 and histidine 450. Catalysis depends on histidine 548, which acts as the Proton acceptor. Asparagine 593 is an active-site residue.

This sequence belongs to the GMC oxidoreductase family. Homotetramer. Requires FAD as cofactor.

Its subcellular location is the periplasm. It carries out the reaction D-glucose + O2 = 2-dehydro-D-glucose + H2O2. Functionally, catalyzes the oxidation of various aldopyranoses and disaccharides on carbon-2 to the corresponding 2-keto sugars concomitant with the reduction of O(2) to H(2)O(2). Plays an important role in lignin degradation of wood rot fungi by supplying the essential cosubstrate H(2)O(2) for the ligninolytic peroxidases, lignin peroxidase and manganese-dependent peroxidase. The polypeptide is Pyranose 2-oxidase (p2ox) (Trametes pubescens (White-rot fungus)).